The chain runs to 186 residues: ATP synthase subunit b (186 aa).

The helical transmembrane segment at 25 to 45 (IVWSVVCVAIIAVVFYKYVIP) threads the bilayer.

The protein belongs to the ATPase B chain family. F-type ATPases have 2 components, F(1) - the catalytic core - and F(0) - the membrane proton channel. F(1) has five subunits: alpha(3), beta(3), gamma(1), delta(1), epsilon(1). F(0) has three main subunits: a(1), b(2) and c(10-14). The alpha and beta chains form an alternating ring which encloses part of the gamma chain. F(1) is attached to F(0) by a central stalk formed by the gamma and epsilon chains, while a peripheral stalk is formed by the delta and b chains.

The protein resides in the cell membrane. In terms of biological role, f(1)F(0) ATP synthase produces ATP from ADP in the presence of a proton or sodium gradient. F-type ATPases consist of two structural domains, F(1) containing the extramembraneous catalytic core and F(0) containing the membrane proton channel, linked together by a central stalk and a peripheral stalk. During catalysis, ATP synthesis in the catalytic domain of F(1) is coupled via a rotary mechanism of the central stalk subunits to proton translocation. Its function is as follows. Component of the F(0) channel, it forms part of the peripheral stalk, linking F(1) to F(0). This Nocardia farcinica (strain IFM 10152) protein is ATP synthase subunit b.